The primary structure comprises 385 residues: Flap endonuclease 1 (385 aa).

The tract at residues 1 to 104 (MGILGLSKLI…GELAKRAERR (104 aa)) is N-domain. Mg(2+) is bound at residue D34. 2 residues coordinate DNA: R47 and R70. D86, E158, E160, D179, and D181 together coordinate Mg(2+). The segment at 122–253 (GIEKFNRRLV…KRAIELINTY (132 aa)) is I-domain. Position 158 (E158) interacts with DNA. Residues G231 and D233 each contribute to the DNA site. Mg(2+) is bound at residue D233. Positions 336–344 (TQVRLDSFF) are interaction with PCNA. Residues 346-385 (TLPSTPNATNAAKRKAEEAKKSANNKKAKTSGGGRGRRPK) form a disordered region. Over residues 368–385 (ANNKKAKTSGGGRGRRPK) the composition is skewed to basic residues.

Belongs to the XPG/RAD2 endonuclease family. FEN1 subfamily. In terms of assembly, interacts with PCNA. Three molecules of FEN1 bind to one PCNA trimer with each molecule binding to one PCNA monomer. PCNA stimulates the nuclease activity without altering cleavage specificity. The cofactor is Mg(2+). In terms of processing, phosphorylated. Phosphorylation upon DNA damage induces relocalization to the nuclear plasma.

It localises to the nucleus. It is found in the nucleolus. The protein localises to the nucleoplasm. The protein resides in the mitochondrion. Structure-specific nuclease with 5'-flap endonuclease and 5'-3' exonuclease activities involved in DNA replication and repair. During DNA replication, cleaves the 5'-overhanging flap structure that is generated by displacement synthesis when DNA polymerase encounters the 5'-end of a downstream Okazaki fragment. It enters the flap from the 5'-end and then tracks to cleave the flap base, leaving a nick for ligation. Also involved in the long patch base excision repair (LP-BER) pathway, by cleaving within the apurinic/apyrimidinic (AP) site-terminated flap. Acts as a genome stabilization factor that prevents flaps from equilibrating into structures that lead to duplications and deletions. Also possesses 5'-3' exonuclease activity on nicked or gapped double-stranded DNA, and exhibits RNase H activity. Also involved in replication and repair of rDNA and in repairing mitochondrial DNA. This chain is Flap endonuclease 1, found in Drosophila simulans (Fruit fly).